A 312-amino-acid polypeptide reads, in one-letter code: Ribosomal protein L11 methyltransferase (312 aa).

S-adenosyl-L-methionine-binding residues include Thr-160, Gly-181, Asp-203, and Asn-248.

The protein belongs to the methyltransferase superfamily. PrmA family.

The protein localises to the cytoplasm. It catalyses the reaction L-lysyl-[protein] + 3 S-adenosyl-L-methionine = N(6),N(6),N(6)-trimethyl-L-lysyl-[protein] + 3 S-adenosyl-L-homocysteine + 3 H(+). Functionally, methylates ribosomal protein L11. The polypeptide is Ribosomal protein L11 methyltransferase (Fusobacterium nucleatum subsp. nucleatum (strain ATCC 25586 / DSM 15643 / BCRC 10681 / CIP 101130 / JCM 8532 / KCTC 2640 / LMG 13131 / VPI 4355)).